The sequence spans 718 residues: Polyribonucleotide nucleotidyltransferase (718 aa).

Mg(2+) is bound by residues Asp-487 and Asp-493. A KH domain is found at Pro-554–Ile-613. One can recognise an S1 motif domain in the interval Gly-623–Lys-691. The disordered stretch occupies residues Val-692 to Glu-718. Positions Leu-701–Glu-718 are enriched in basic and acidic residues.

It belongs to the polyribonucleotide nucleotidyltransferase family. The cofactor is Mg(2+).

It is found in the cytoplasm. The enzyme catalyses RNA(n+1) + phosphate = RNA(n) + a ribonucleoside 5'-diphosphate. Its function is as follows. Involved in mRNA degradation. Catalyzes the phosphorolysis of single-stranded polyribonucleotides processively in the 3'- to 5'-direction. This is Polyribonucleotide nucleotidyltransferase from Nitrobacter winogradskyi (strain ATCC 25391 / DSM 10237 / CIP 104748 / NCIMB 11846 / Nb-255).